Here is a 348-residue protein sequence, read N- to C-terminus: Phosphate acyltransferase (348 aa).

It belongs to the PlsX family. Homodimer. Probably interacts with PlsY.

It is found in the cytoplasm. It carries out the reaction a fatty acyl-[ACP] + phosphate = an acyl phosphate + holo-[ACP]. It functions in the pathway lipid metabolism; phospholipid metabolism. Its function is as follows. Catalyzes the reversible formation of acyl-phosphate (acyl-PO(4)) from acyl-[acyl-carrier-protein] (acyl-ACP). This enzyme utilizes acyl-ACP as fatty acyl donor, but not acyl-CoA. The chain is Phosphate acyltransferase from Pectobacterium carotovorum subsp. carotovorum (strain PC1).